The chain runs to 263 residues: Interleukin-15 receptor subunit alpha (263 aa).

Residues 1 to 32 (MASPQLRGYGVQAIPVLLLLLLLLLLPLRVTP) form the signal peptide. At 33 to 205 (GTTCPPPVSI…ISPHSSKMTK (173 aa)) the chain is on the extracellular side. Positions 34 to 98 (TTCPPPVSIE…WTTPSLKCIR (65 aa)) constitute a Sushi domain. 2 disulfides stabilise this stretch: Cys-36-Cys-78 and Cys-62-Cys-96. The N-linked (GlcNAc...) asparagine glycan is linked to Asn-51. Residues 113 to 135 (TPKVTSQPESPSPSAKEPEAFSP) are compositionally biased toward low complexity. The disordered stretch occupies residues 113–178 (TPKVTSQPES…HKSSRAPSLA (66 aa)). The span at 136-145 (KSDTAMTTET) shows a compositional bias: polar residues. Positions 154–169 (TPSQTTSAGTTGTGSH) are enriched in low complexity. A helical transmembrane segment spans residues 206 to 226 (VAISTSVLLVGAGVVMAFLAW). At 227–263 (YIKSRQPSQPCRVEVETMETVPMTVRASSKEDEDTGA) the chain is on the cytoplasmic side.

The interleukin-15 receptor IL15R is a heterotrimer of IL15RA, IL2RB and IL2RG. IL15RA also self-associates. Interacts with SYK. In terms of processing, N-glycosylated and O-glycosylated. A soluble form (sIL-15RA) arises from proteolytic shedding of the membrane-anchored receptor. It also binds IL15 and thus interferes with IL15 binding to the membrane receptor. As to expression, widely expressed.

Its subcellular location is the membrane. The protein localises to the nucleus membrane. It localises to the cell surface. The protein resides in the secreted. It is found in the extracellular space. High-affinity receptor for interleukin-15. Can signal both in cis and trans where IL15R from one subset of cells presents IL15 to neighboring IL2RG-expressing cells. In neutrophils, binds and activates kinase SYK in response to IL15 stimulation. In neutrophils, required for IL15-induced phagocytosis in a SYK-dependent manner. The protein is Interleukin-15 receptor subunit alpha (Il15ra) of Mus musculus (Mouse).